Consider the following 341-residue polypeptide: tRNA N6-adenosine threonylcarbamoyltransferase (341 aa).

Fe cation is bound by residues H111 and H115. Substrate-binding positions include L134–G138, D167, G180, and N276. A Fe cation-binding site is contributed by D304.

The protein belongs to the KAE1 / TsaD family. It depends on Fe(2+) as a cofactor.

Its subcellular location is the cytoplasm. The enzyme catalyses L-threonylcarbamoyladenylate + adenosine(37) in tRNA = N(6)-L-threonylcarbamoyladenosine(37) in tRNA + AMP + H(+). Required for the formation of a threonylcarbamoyl group on adenosine at position 37 (t(6)A37) in tRNAs that read codons beginning with adenine. Is involved in the transfer of the threonylcarbamoyl moiety of threonylcarbamoyl-AMP (TC-AMP) to the N6 group of A37, together with TsaE and TsaB. TsaD likely plays a direct catalytic role in this reaction. In Pseudomonas putida (strain ATCC 47054 / DSM 6125 / CFBP 8728 / NCIMB 11950 / KT2440), this protein is tRNA N6-adenosine threonylcarbamoyltransferase.